The following is a 547-amino-acid chain: Probable bifunctional tRNA threonylcarbamoyladenosine biosynthesis protein (547 aa).

The tract at residues Met1–Trp329 is kae1. 3 residues coordinate Fe cation: His113, His117, and Tyr134. Residues Tyr134–Ala138, Asp166, Gly179, Glu183, and Asn262 each bind L-threonylcarbamoyladenylate. Asp290 contributes to the Fe cation binding site. In terms of domain architecture, Protein kinase spans Glu340–Ala547. Residues Leu355–Val363 and Lys377 each bind ATP. The active-site Proton acceptor; for kinase activity is the Asp464.

This sequence in the N-terminal section; belongs to the KAE1 / TsaD family. It in the C-terminal section; belongs to the protein kinase superfamily. Tyr protein kinase family. BUD32 subfamily. In terms of assembly, component of the KEOPS complex that consists of Kae1, Bud32, Cgi121 and Pcc1; the whole complex dimerizes. It depends on Fe(2+) as a cofactor.

The protein resides in the cytoplasm. It carries out the reaction L-seryl-[protein] + ATP = O-phospho-L-seryl-[protein] + ADP + H(+). The enzyme catalyses L-threonyl-[protein] + ATP = O-phospho-L-threonyl-[protein] + ADP + H(+). It catalyses the reaction L-threonylcarbamoyladenylate + adenosine(37) in tRNA = N(6)-L-threonylcarbamoyladenosine(37) in tRNA + AMP + H(+). Its function is as follows. Required for the formation of a threonylcarbamoyl group on adenosine at position 37 (t(6)A37) in tRNAs that read codons beginning with adenine. Is a component of the KEOPS complex that is probably involved in the transfer of the threonylcarbamoyl moiety of threonylcarbamoyl-AMP (TC-AMP) to the N6 group of A37. The Kae1 domain likely plays a direct catalytic role in this reaction. The Bud32 domain probably displays kinase activity that regulates Kae1 function. This chain is Probable bifunctional tRNA threonylcarbamoyladenosine biosynthesis protein, found in Methanosarcina mazei (strain ATCC BAA-159 / DSM 3647 / Goe1 / Go1 / JCM 11833 / OCM 88) (Methanosarcina frisia).